Here is a 67-residue protein sequence, read N- to C-terminus: DNA-directed RNA polymerase subunit Rpo10 (67 aa).

4 residues coordinate Zn(2+): Cys7, Cys10, Cys44, and Cys45.

The protein belongs to the archaeal Rpo10/eukaryotic RPB10 RNA polymerase subunit family. As to quaternary structure, part of the RNA polymerase complex. Requires Zn(2+) as cofactor.

Its subcellular location is the cytoplasm. The catalysed reaction is RNA(n) + a ribonucleoside 5'-triphosphate = RNA(n+1) + diphosphate. DNA-dependent RNA polymerase (RNAP) catalyzes the transcription of DNA into RNA using the four ribonucleoside triphosphates as substrates. This Caldivirga maquilingensis (strain ATCC 700844 / DSM 13496 / JCM 10307 / IC-167) protein is DNA-directed RNA polymerase subunit Rpo10.